We begin with the raw amino-acid sequence, 187 residues long: Large ribosomal subunit protein bL32m (187 aa).

C109, C112, C122, and C125 together coordinate Zn(2+).

Belongs to the bacterial ribosomal protein bL32 family. In terms of assembly, component of the mitochondrial ribosome large subunit (39S) which comprises a 16S rRNA and about 50 distinct proteins. MRPL32 precursor is processed by the m-AAA protease (composed of AFG3L2 and SPG7), which cleaves the N-terminal transit peptide. Cleavage by the m-AAA protease takes place prior to assembly into the large subunit, an essential step for mitochondrial ribosome (mitoribosome) assembly. Proper processing by the m-AAA protease is dependent on the zinc-binding region within the tightly folded C-terminal domain of MRPL32: zinc-dependent folding halts degradation initiated from the N-terminus and triggers the release of mature MRPL32.

The protein localises to the mitochondrion. In terms of biological role, component of the mitochondrial large ribosomal subunit (mt-LSU). The mitochondrial ribosome (mitoribosome) is a large ribonucleoprotein complex responsible for the synthesis of proteins inside mitochondria. The sequence is that of Large ribosomal subunit protein bL32m (Mrpl32) from Mus musculus (Mouse).